Here is a 427-residue protein sequence, read N- to C-terminus: UPF0597 protein CD630_32320 (427 aa).

It belongs to the UPF0597 family.

The protein is UPF0597 protein CD630_32320 of Clostridioides difficile (strain 630) (Peptoclostridium difficile).